The chain runs to 223 residues: Icarapin (223 aa).

An N-terminal signal peptide occupies residues Met1 to Ser19. Asn126, Asn142, Asn168, and Asn193 each carry an N-linked (GlcNAc...) asparagine glycan. Over residues Leu186 to Val203 the composition is skewed to polar residues. Positions Leu186 to Ala223 are disordered.

As to expression, expressed by the venom duct.

Its subcellular location is the secreted. This chain is Icarapin, found in Apis mellifera carnica (Carniolan honeybee).